A 576-amino-acid chain; its full sequence is Arginine--tRNA ligase (576 aa).

The 'HIGH' region signature appears at 132–142; that stretch reads ANPTGPMHIGH.

It belongs to the class-I aminoacyl-tRNA synthetase family. In terms of assembly, monomer.

The protein localises to the cytoplasm. The catalysed reaction is tRNA(Arg) + L-arginine + ATP = L-arginyl-tRNA(Arg) + AMP + diphosphate. In Ehrlichia ruminantium (strain Welgevonden), this protein is Arginine--tRNA ligase.